We begin with the raw amino-acid sequence, 398 residues long: Na(+)/H(+) antiporter NhaA (398 aa).

The next 12 membrane-spanning stretches (helical) occupy residues 9–29 (MITH…AAIV), 57–77 (LSLL…AVGL), 95–115 (AFPA…YSLM), 124–144 (AGWA…LALL), 154–174 (VFML…IALF), 177–197 (TALE…MALM), 204–224 (FLSL…LSGI), 226–246 (ATLA…STEV), 255–275 (WLQP…NAGI), 288–308 (FLPL…IVLF), 329–349 (IAAA…IANL), and 359–379 (IVLA…LGYL).

The protein belongs to the NhaA Na(+)/H(+) (TC 2.A.33) antiporter family.

It localises to the cell inner membrane. It catalyses the reaction Na(+)(in) + 2 H(+)(out) = Na(+)(out) + 2 H(+)(in). Na(+)/H(+) antiporter that extrudes sodium in exchange for external protons. The sequence is that of Na(+)/H(+) antiporter NhaA from Sodalis glossinidius (strain morsitans).